The sequence spans 265 residues: Signal peptidase I (265 aa).

Topologically, residues 1–19 (MQIDTKTNTNKTTAQEWKS) are cytoplasmic. The helical transmembrane segment at 20-40 (FAFVVCIALLIRILIMEPFTV) threads the bilayer. Residues 41 to 265 (PTGSMKATIL…IFRNLYNTDE (225 aa)) lie on the Periplasmic side of the membrane. Active-site residues include Ser-44 and Lys-107.

It belongs to the peptidase S26 family.

Its subcellular location is the cell inner membrane. It catalyses the reaction Cleavage of hydrophobic, N-terminal signal or leader sequences from secreted and periplasmic proteins.. In Rickettsia canadensis (strain McKiel), this protein is Signal peptidase I (lepB).